The following is a 130-amino-acid chain: Small ribosomal subunit protein uS9 (130 aa).

This sequence belongs to the universal ribosomal protein uS9 family.

This chain is Small ribosomal subunit protein uS9, found in Shewanella halifaxensis (strain HAW-EB4).